Here is an 879-residue protein sequence, read N- to C-terminus: Band 4.1-like protein 1 (879 aa).

Residues Met1–Glu64 are disordered. A compositionally biased stretch (low complexity) spans Glu17–Ala35. The residue at position 30 (Thr30) is a Phosphothreonine. Basic and acidic residues predominate over residues Ser38–Thr50. Phosphoserine is present on Ser75. The residue at position 79 (Thr79) is a Phosphothreonine. The 282-residue stretch at Ala97–Ser378 folds into the FERM domain. The residue at position 343 (Tyr343) is a Phosphotyrosine. Phosphoserine is present on residues Ser378, Ser430, Ser437, Ser461, and Ser466. The tract at residues Ser428–Glu501 is disordered. Residues Glu444–Glu501 are compositionally biased toward basic and acidic residues. Thr475 carries the post-translational modification Phosphothreonine. A spectrin--actin-binding region spans residues Lys483 to Ser541. Position 510 is a phosphoserine (Ser510). A compositionally biased stretch (basic and acidic residues) spans Leu514 to Leu538. Disordered regions lie at residues Leu514–Asp596, Phe633–Glu687, and Ser718–Pro742. Phosphoserine is present on residues Ser540, Ser541, Ser544, and Ser546. Thr550 is modified (phosphothreonine). Residues Thr550–Glu577 are compositionally biased toward basic and acidic residues. Ser564 and Ser578 each carry phosphoserine. Thr580 carries the post-translational modification Phosphothreonine. Residues Glu583, Gln587, Ser639, Ser648, Ser650, Ser665, Ser666, Asp669, Ser671, Ser677, and Ser684 each carry the phosphoserine modification. Residues Asp635 to Ser650 show a composition bias toward basic and acidic residues. Phosphothreonine is present on Thr685. Residues Ser718–Val728 show a composition bias toward polar residues. Residues Ser721, Pro742, Ala766, Ser782, and Ser868 each carry the phosphoserine modification. Residues Cys744–Ser879 are C-terminal (CTD).

As to quaternary structure, interacts with AGAP2. Highest expression in brain, lower in heart and kidney. Within the brain, highest expression in cerebellum.

Its subcellular location is the cytoplasm. It is found in the cytoskeleton. Its function is as follows. May function to confer stability and plasticity to neuronal membrane via multiple interactions, including the spectrin-actin-based cytoskeleton, integral membrane channels and membrane-associated guanylate kinases. The chain is Band 4.1-like protein 1 from Rattus norvegicus (Rat).